The sequence spans 442 residues: MLAETPLLETTLERELATLAVGRRYGKVVEVVGTMLKVAGVQVSLGEVCELRQRDGTLLQRAEVVGFSRDLALLAPFGELIGLSRETRVIGLGRPLAVPVGPALLGRVLDGLGEPSDGQGAIACDTWVPIQAQAPDPMRRRLIEHPMPTGVRIVDGLMTLGEGQRMGIFAAAGVGKSTLMGMFARGTQCDVNVIVLIGERGREVREFIELILGADGLARSVVVCATSDRSSIERAKAAYVGTAIAEYFRDRGLRVLLMMDSLTRFARAQREIGLAAGEPPTRRGFPPSVFAELPRLLERAGMGESGSITAFYTVLAEDDTGSDPIAEEVRGILDGHLILSREIAAKNQYPAIDVLASLSRVMSQIVPYDHSQAAGRLRRLLAKYNEVETLVQVGEYRQGSDAVADEAIDRIDAIRDFLSQPTDQLSAYENTLELLTSVTDDA.

Residue 173–178 (GVGKST) participates in ATP binding.

It belongs to the ATPase alpha/beta chains family. T3SS ATPase subfamily. In terms of assembly, the core secretion machinery of the T3SS is composed of approximately 20 different proteins, including cytoplasmic components, a base, an export apparatus and a needle. This subunit is part of the cytosolic complex. Forms homohexamers.

It localises to the cytoplasm. The catalysed reaction is ATP + H2O + cellular proteinSide 1 = ADP + phosphate + cellular proteinSide 2.. Its function is as follows. ATPase component of the type III secretion system (T3SS), also called injectisome, which is used to inject bacterial effector proteins into eukaryotic host cells. Acts as a molecular motor to provide the energy that is required for the export of proteins. Required for type III secretion apparatus (T3SA) formation, proper protein secretion, host cell invasion and virulence. May play a critical role in T3SS substrate recognition, disassembly of the effector/chaperone complex and unfolding of the effector in an ATP-dependent manner prior to secretion. The protein is Type 3 secretion system ATPase of Xanthomonas euvesicatoria.